The chain runs to 234 residues: NLP effector protein Pc576423 (234 aa).

Residues Met1–Ala18 form the signal peptide. Asn35 and Asn66 each carry an N-linked (GlcNAc...) asparagine glycan. Positions Gly119–Glu125 match the Hepta-peptide GHRHDWE motif motif.

It belongs to the Necrosis inducing protein (NPP1) family.

It is found in the secreted. Its function is as follows. Secreted effector that contributes strongly to virulence during infection by P.capsici. The protein is NLP effector protein Pc576423 of Phytophthora capsici.